The following is a 162-amino-acid chain: MGRIQQAFRGALLMDFWSAFGLGMRYFFAKKATLNYPFEKGPLSPRFRGQHALRRYANGEERCIACKLCEAICPAQAITIEAEPRSDGSRRTTRYDIDMTKCIYCGYCQEACPVDAIVEGPNFEFAAETREELFYDKAKLLENGDRWEREIAKNLELDAPYR.

4Fe-4S ferredoxin-type domains lie at 53-83 (LRRY…IEAE) and 93-122 (TRYD…EGPN). [4Fe-4S] cluster-binding residues include Cys-63, Cys-66, Cys-69, Cys-73, Cys-102, Cys-105, Cys-108, and Cys-112.

It belongs to the complex I 23 kDa subunit family. In terms of assembly, NDH-1 is composed of 14 different subunits. Subunits NuoA, H, J, K, L, M, N constitute the membrane sector of the complex. [4Fe-4S] cluster serves as cofactor.

It is found in the cell inner membrane. It catalyses the reaction a quinone + NADH + 5 H(+)(in) = a quinol + NAD(+) + 4 H(+)(out). In terms of biological role, NDH-1 shuttles electrons from NADH, via FMN and iron-sulfur (Fe-S) centers, to quinones in the respiratory chain. The immediate electron acceptor for the enzyme in this species is believed to be ubiquinone. Couples the redox reaction to proton translocation (for every two electrons transferred, four hydrogen ions are translocated across the cytoplasmic membrane), and thus conserves the redox energy in a proton gradient. This is NADH-quinone oxidoreductase subunit I from Maricaulis maris (strain MCS10) (Caulobacter maris).